The primary structure comprises 199 residues: MTVKLVLASKSPFRSALLKNAGIEFSTASADIDERAVEAPLYESGATPEDVAQILAEAKAIDVSEKNPGAVVIGCDQTLSLGDEIFHKPHDMEAARRQLQKISGKTHQLNSAVVLARDGKTLWRHVSIAHMTMRDLDAGFIGRYIGRVGDIALSSVGAYQVEGPGIQLFEKIDGDYFTIVGLPLLPLLAELRREKCIDG.

The active-site Proton acceptor is Asp-76.

This sequence belongs to the Maf family. YceF subfamily. A divalent metal cation serves as cofactor.

The protein localises to the cytoplasm. It carries out the reaction N(7)-methyl-GTP + H2O = N(7)-methyl-GMP + diphosphate + H(+). In terms of biological role, nucleoside triphosphate pyrophosphatase that hydrolyzes 7-methyl-GTP (m(7)GTP). May have a dual role in cell division arrest and in preventing the incorporation of modified nucleotides into cellular nucleic acids. In Brucella abortus biovar 1 (strain 9-941), this protein is 7-methyl-GTP pyrophosphatase.